We begin with the raw amino-acid sequence, 120 residues long: Large ribosomal subunit protein uL22 (120 aa).

The protein belongs to the universal ribosomal protein uL22 family. Part of the 50S ribosomal subunit.

This protein binds specifically to 23S rRNA; its binding is stimulated by other ribosomal proteins, e.g. L4, L17, and L20. It is important during the early stages of 50S assembly. It makes multiple contacts with different domains of the 23S rRNA in the assembled 50S subunit and ribosome. In terms of biological role, the globular domain of the protein is located near the polypeptide exit tunnel on the outside of the subunit, while an extended beta-hairpin is found that lines the wall of the exit tunnel in the center of the 70S ribosome. The sequence is that of Large ribosomal subunit protein uL22 from Corynebacterium aurimucosum (strain ATCC 700975 / DSM 44827 / CIP 107346 / CN-1) (Corynebacterium nigricans).